Here is a 311-residue protein sequence, read N- to C-terminus: Acetyl-coenzyme A carboxylase carboxyl transferase subunit alpha (311 aa).

The 258-residue stretch at 32-289 (ELNLLEERLR…KSVLEQKLAQ (258 aa)) folds into the CoA carboxyltransferase C-terminal domain.

This sequence belongs to the AccA family. In terms of assembly, acetyl-CoA carboxylase is a heterohexamer composed of biotin carboxyl carrier protein (AccB), biotin carboxylase (AccC) and two subunits each of ACCase subunit alpha (AccA) and ACCase subunit beta (AccD).

The protein localises to the cytoplasm. It carries out the reaction N(6)-carboxybiotinyl-L-lysyl-[protein] + acetyl-CoA = N(6)-biotinyl-L-lysyl-[protein] + malonyl-CoA. Its pathway is lipid metabolism; malonyl-CoA biosynthesis; malonyl-CoA from acetyl-CoA: step 1/1. Component of the acetyl coenzyme A carboxylase (ACC) complex. First, biotin carboxylase catalyzes the carboxylation of biotin on its carrier protein (BCCP) and then the CO(2) group is transferred by the carboxyltransferase to acetyl-CoA to form malonyl-CoA. This is Acetyl-coenzyme A carboxylase carboxyl transferase subunit alpha from Exiguobacterium sibiricum (strain DSM 17290 / CCUG 55495 / CIP 109462 / JCM 13490 / 255-15).